A 78-amino-acid polypeptide reads, in one-letter code: Sec-independent protein translocase protein TatA (78 aa).

The helical transmembrane segment at Met-1 to Gly-21 threads the bilayer. A disordered region spans residues Leu-43–Val-78. Residues Ala-54 to Leu-63 show a composition bias toward pro residues.

Belongs to the TatA/E family. The Tat system comprises two distinct complexes: a TatABC complex, containing multiple copies of TatA, TatB and TatC subunits, and a separate TatA complex, containing only TatA subunits. Substrates initially bind to the TatABC complex, which probably triggers association of the separate TatA complex to form the active translocon.

It is found in the cell inner membrane. Part of the twin-arginine translocation (Tat) system that transports large folded proteins containing a characteristic twin-arginine motif in their signal peptide across membranes. TatA could form the protein-conducting channel of the Tat system. In Xanthobacter autotrophicus (strain ATCC BAA-1158 / Py2), this protein is Sec-independent protein translocase protein TatA.